A 542-amino-acid chain; its full sequence is GMP synthase [glutamine-hydrolyzing] (542 aa).

Residues 28-218 enclose the Glutamine amidotransferase type-1 domain; it reads MIVILDFGSQ…VYHICECEPT (191 aa). Catalysis depends on Cys-105, which acts as the Nucleophile. Catalysis depends on residues His-192 and Glu-194. The GMPS ATP-PPase domain occupies 219 to 417; it reads WTTEAFVEEA…IGLPEEIVRR (199 aa). 246 to 252 lines the ATP pocket; it reads SGGVDSS.

As to quaternary structure, homodimer.

It catalyses the reaction XMP + L-glutamine + ATP + H2O = GMP + L-glutamate + AMP + diphosphate + 2 H(+). The protein operates within purine metabolism; GMP biosynthesis; GMP from XMP (L-Gln route): step 1/1. Functionally, catalyzes the synthesis of GMP from XMP. The polypeptide is GMP synthase [glutamine-hydrolyzing] (Gloeothece citriformis (strain PCC 7424) (Cyanothece sp. (strain PCC 7424))).